Here is a 272-residue protein sequence, read N- to C-terminus: Ribosomal RNA small subunit methyltransferase A (272 aa).

Residues N27, L29, G54, E75, D97, and N117 each contribute to the S-adenosyl-L-methionine site.

This sequence belongs to the class I-like SAM-binding methyltransferase superfamily. rRNA adenine N(6)-methyltransferase family. RsmA subfamily.

The protein localises to the cytoplasm. It catalyses the reaction adenosine(1518)/adenosine(1519) in 16S rRNA + 4 S-adenosyl-L-methionine = N(6)-dimethyladenosine(1518)/N(6)-dimethyladenosine(1519) in 16S rRNA + 4 S-adenosyl-L-homocysteine + 4 H(+). Specifically dimethylates two adjacent adenosines (A1518 and A1519) in the loop of a conserved hairpin near the 3'-end of 16S rRNA in the 30S particle. May play a critical role in biogenesis of 30S subunits. The chain is Ribosomal RNA small subunit methyltransferase A from Malacoplasma penetrans (strain HF-2) (Mycoplasma penetrans).